The following is a 257-amino-acid chain: Acetylglutamate kinase (257 aa).

Residues 43–44 (GG), Arg-65, and Asn-157 each bind substrate.

The protein belongs to the acetylglutamate kinase family. ArgB subfamily.

Its subcellular location is the cytoplasm. The enzyme catalyses N-acetyl-L-glutamate + ATP = N-acetyl-L-glutamyl 5-phosphate + ADP. Its pathway is amino-acid biosynthesis; L-arginine biosynthesis; N(2)-acetyl-L-ornithine from L-glutamate: step 2/4. In terms of biological role, catalyzes the ATP-dependent phosphorylation of N-acetyl-L-glutamate. In Mannheimia succiniciproducens (strain KCTC 0769BP / MBEL55E), this protein is Acetylglutamate kinase.